A 91-amino-acid polypeptide reads, in one-letter code: Class I hydrophobin E (91 aa).

An N-terminal signal peptide occupies residues 1–16 (MKFSIAAIALAAVAVA). Cystine bridges form between cysteine 30/cysteine 72, cysteine 42/cysteine 64, cysteine 43/cysteine 55, and cysteine 73/cysteine 89. The N-linked (GlcNAc...) asparagine glycan is linked to asparagine 83.

This sequence belongs to the fungal hydrophobin family.

It is found in the secreted. It localises to the cell wall. Its subcellular location is the vacuole. The protein resides in the cytoplasmic vesicle. Functionally, aerial growth, conidiation, and dispersal of filamentous fungi in the environment rely upon a capability of their secreting small amphipathic proteins called hydrophobins (HPBs) with low sequence identity. Class I can self-assemble into an outermost layer of rodlet bundles on aerial cell surfaces, conferring cellular hydrophobicity that supports fungal growth, development and dispersal; whereas Class II form highly ordered films at water-air interfaces through intermolecular interactions but contribute nothing to the rodlet structure. Hyd1E contributes to certain cell wall-related features, such as hydrophobicity but is not involved in cell wall-related events during fungal proliferation in host hemocoel. Does not contribute to conidial hydrophobicity. The sequence is that of Class I hydrophobin E from Beauveria bassiana (strain ARSEF 2860) (White muscardine disease fungus).